An 836-amino-acid polypeptide reads, in one-letter code: Eukaryotic translation initiation factor 3 subunit C (836 aa).

The interval 1-97 is disordered; it reads MSRFFVSGYD…RRVVKSAKEK (97 aa). Acidic residues predominate over residues 13 to 55; that stretch reads SSSEEEDLLTSSEEELMSSEQESDSEFDDEFANDDDSDSSDSD. Residues 86-97 show a composition bias toward basic and acidic residues; the sequence is EGRRVVKSAKEK. One can recognise a PCI domain in the interval 586 to 761; it reads FHMHINLELL…KSINFVSSEH (176 aa). The tract at residues 783–817 is disordered; sequence DKNEKTASNGHGRKTTQQQQQQQQKEQREQTHDEN. The segment covering 797–806 has biased composition (low complexity); that stretch reads TTQQQQQQQQ. Residues 807-817 are compositionally biased toward basic and acidic residues; the sequence is KEQREQTHDEN.

The protein belongs to the eIF-3 subunit C family. As to quaternary structure, component of the eukaryotic translation initiation factor 3 (eIF-3) complex.

The protein resides in the cytoplasm. Functionally, component of the eukaryotic translation initiation factor 3 (eIF-3) complex, which is involved in protein synthesis of a specialized repertoire of mRNAs and, together with other initiation factors, stimulates binding of mRNA and methionyl-tRNAi to the 40S ribosome. The eIF-3 complex specifically targets and initiates translation of a subset of mRNAs involved in cell proliferation. This is Eukaryotic translation initiation factor 3 subunit C from Meyerozyma guilliermondii (strain ATCC 6260 / CBS 566 / DSM 6381 / JCM 1539 / NBRC 10279 / NRRL Y-324) (Yeast).